Here is a 292-residue protein sequence, read N- to C-terminus: D-tagatose-1,6-bisphosphate aldolase subunit KbaY (292 aa).

The active-site Proton donor is the Asp-82. 2 residues coordinate Zn(2+): His-83 and His-180. Gly-181 serves as a coordination point for dihydroxyacetone phosphate. Position 208 (His-208) interacts with Zn(2+). Dihydroxyacetone phosphate contacts are provided by residues 209–211 and 230–233; these read GAS and NVAT.

Belongs to the class II fructose-bisphosphate aldolase family. TagBP aldolase KbaY subfamily. Homotetramer. Forms a complex with KbaZ. Requires Zn(2+) as cofactor.

It catalyses the reaction D-tagatofuranose 1,6-bisphosphate = D-glyceraldehyde 3-phosphate + dihydroxyacetone phosphate. Its pathway is carbohydrate metabolism; D-tagatose 6-phosphate degradation; D-glyceraldehyde 3-phosphate and glycerone phosphate from D-tagatose 6-phosphate: step 2/2. Catalytic subunit of the tagatose-1,6-bisphosphate aldolase KbaYZ, which catalyzes the reversible aldol condensation of dihydroxyacetone phosphate (DHAP or glycerone-phosphate) with glyceraldehyde 3-phosphate (G3P) to produce tagatose 1,6-bisphosphate (TBP). Requires KbaZ subunit for full activity and stability. The chain is D-tagatose-1,6-bisphosphate aldolase subunit KbaY from Enterobacter sp. (strain 638).